Consider the following 306-residue polypeptide: Recombination-associated protein RdgC (306 aa).

Belongs to the RdgC family.

It localises to the cytoplasm. Its subcellular location is the nucleoid. Its function is as follows. May be involved in recombination. The polypeptide is Recombination-associated protein RdgC (Pseudomonas fluorescens (strain SBW25)).